The chain runs to 619 residues: Trihelix transcription factor GTL2 (619 aa).

Disordered regions lie at residues His-11–Ser-41 and His-62–His-100. A compositionally biased stretch (pro residues) spans Ser-16–Gln-27. A Myb-like 1 domain is found at Pro-102–Glu-154. Residues Val-307–Ala-361 are a coiled coil. 2 disordered regions span residues Val-382 to Leu-414 and Ser-434 to Lys-458. The segment covering Gln-384–Leu-396 has biased composition (polar residues). The span at Thr-435–Asn-444 shows a compositional bias: low complexity. Over residues Pro-448–Lys-458 the composition is skewed to basic and acidic residues. The 68-residue stretch at Arg-459–Asn-526 folds into the Myb-like 2 domain. Positions Ser-503–Gly-510 match the Nuclear localization signal motif. A disordered region spans residues Ser-557 to Phe-619. Positions Thr-561–Ala-574 are enriched in low complexity. The segment covering Arg-575 to Arg-585 has biased composition (basic and acidic residues).

It localises to the nucleus. Probable transcription factor that binds specific DNA sequence. The sequence is that of Trihelix transcription factor GTL2 from Arabidopsis thaliana (Mouse-ear cress).